A 266-amino-acid polypeptide reads, in one-letter code: Protein PYRICULARIA ORYZAE RESISTANCE 21 (266 aa).

In terms of domain architecture, HMA spans 1–68 (MGILVILVDL…IWCKAGKIIK (68 aa)). A metal cation is bound by residues Cys-12 and Cys-15. Residues 129–156 (CEKPKPCEKPPPCKPEEPPKPPPEKPPP) are disordered. Over residues 142 to 156 (KPEEPPKPPPEKPPP) the composition is skewed to basic and acidic residues.

Involved in defense responses. Contributes to slowing defense responses toward Magnaporthe oryzae. This Oryza sativa subsp. japonica (Rice) protein is Protein PYRICULARIA ORYZAE RESISTANCE 21.